Here is a 212-residue protein sequence, read N- to C-terminus: Nascent polypeptide-associated complex subunit alpha-like protein 4 (212 aa).

Residues 25–35 are compositionally biased toward basic and acidic residues; sequence QKENDVVVEDV. The disordered stretch occupies residues 25 to 74; sequence QKENDVVVEDVKDGDEDDDDVDDDDDEIADGAGENEASKQSRSEKKSRKA. Positions 36–53 are enriched in acidic residues; it reads KDGDEDDDDVDDDDDEIA. The region spanning 65–130 is the NAC-A/B domain; that stretch reads SRSEKKSRKA…AKIDDMSSQL (66 aa). The UBA domain occupies 173-210; it reads VEAKDIDLVMTQAGVSRPKAVKALKESNGDIVSAIMEL.

It belongs to the NAC-alpha family.

Functionally, may promote appropriate targeting of ribosome-nascent polypeptide complexes. This Arabidopsis thaliana (Mouse-ear cress) protein is Nascent polypeptide-associated complex subunit alpha-like protein 4.